The primary structure comprises 784 residues: E3 ubiquitin-protein ligase RNF43 (784 aa).

The N-terminal stretch at 1 to 23 (MSGGHQLQLAVLWPWLLMATLHA) is a signal peptide. The Extracellular portion of the chain corresponds to 24–197 (GFGHTGRVLA…LKEPPAGANY (174 aa)). N-linked (GlcNAc...) asparagine glycosylation is found at Asn-62 and Asn-92. Cysteines 91 and 119 form a disulfide. Residues 198 to 218 (DVWILLTVVGTVFVIILASVL) traverse the membrane as a helical segment. At 219-784 (RIRCRPHHSR…ELEELCEQAV (566 aa)) the chain is on the cytoplasmic side. The segment at 272–313 (CAICLEEFSEGQELRVISCLHEFHRTCVDPWLYQHRTCPLCM) adopts an RING-type; atypical zinc-finger fold. Disordered regions lie at residues 364 to 407 (TSVA…HLAV), 459 to 478 (ADGP…SSDS), and 516 to 671 (DLQG…SLPP). The segment covering 386–395 (RHQRLPRTSH) has biased composition (basic residues). Residues 464-478 (SDSSSGPCHGSSSDS) are compositionally biased toward low complexity. Residues 548 to 568 (IHYHRHRHHHYKRQFQWHGRK) are compositionally biased toward basic residues. A compositionally biased stretch (polar residues) spans 583 to 608 (SHTQLEPSLPDQQLITPNPTASSMLP). A compositionally biased stretch (low complexity) spans 618-629 (EPAPGLAEASSP).

This sequence belongs to the ZNRF3 family. As to quaternary structure, interacts with AKAP8L, NONO and SFPQ. Interacts with FZD5. Identified in a complex composed of RNF43, LGR5 and RSPO1. Interacts with RSPO2. Interacts with LMBR1L. Autoubiquitinated. In terms of tissue distribution, expressed in crypt base columnar cells of small intestinal epithelium. Crypt base columnar cells are small cycling cells residing between the terminally differentiated Paneth cells at crypt bottoms. Colocalizes with Lgr5-positive stem cells.

The protein resides in the cell membrane. It is found in the endoplasmic reticulum membrane. It localises to the nucleus envelope. The enzyme catalyses S-ubiquitinyl-[E2 ubiquitin-conjugating enzyme]-L-cysteine + [acceptor protein]-L-lysine = [E2 ubiquitin-conjugating enzyme]-L-cysteine + N(6)-ubiquitinyl-[acceptor protein]-L-lysine.. It functions in the pathway protein modification; protein ubiquitination. Its function is as follows. E3 ubiquitin-protein ligase that acts as a negative regulator of the Wnt signaling pathway by mediating the ubiquitination, endocytosis and subsequent degradation of Wnt receptor complex components Frizzled. Acts on both canonical and non-canonical Wnt signaling pathway. Along with RSPO2 and ZNRF3, constitutes a master switch that governs limb specification. This is E3 ubiquitin-protein ligase RNF43 (Rnf43) from Mus musculus (Mouse).